The following is a 128-amino-acid chain: Small ribosomal subunit protein uS13 (128 aa).

The disordered stretch occupies residues 85–128 (GSYRGLRHRRSLPVRGQRTHTNARTRKGPRRGTVANKKKATGKT). The segment covering 89-128 (GLRHRRSLPVRGQRTHTNARTRKGPRRGTVANKKKATGKT) has biased composition (basic residues).

This sequence belongs to the universal ribosomal protein uS13 family. As to quaternary structure, part of the 30S ribosomal subunit. Forms a loose heterodimer with protein S19. Forms two bridges to the 50S subunit in the 70S ribosome.

Functionally, located at the top of the head of the 30S subunit, it contacts several helices of the 16S rRNA. In the 70S ribosome it contacts the 23S rRNA (bridge B1a) and protein L5 of the 50S subunit (bridge B1b), connecting the 2 subunits; these bridges are implicated in subunit movement. Contacts the tRNAs in the A and P-sites. This is Small ribosomal subunit protein uS13 from Solibacter usitatus (strain Ellin6076).